The following is a 166-amino-acid chain: Interferon gamma (166 aa).

The first 23 residues, 1–23 (MKYTSSFLALLLCVLLGFSGSYG), serve as a signal peptide directing secretion. Residue Gln-24 is modified to Pyrrolidone carboxylic acid. Asn-39 and Asn-106 each carry an N-linked (GlcNAc...) asparagine glycan.

Belongs to the type II (or gamma) interferon family. In terms of assembly, homodimer. Interacts with IFNGR1 (via extracellular domain); this interaction promotes IFNGR1 dimerization. Released primarily from activated T lymphocytes.

It localises to the secreted. In terms of biological role, type II interferon produced by immune cells such as T-cells and NK cells that plays crucial roles in antimicrobial, antiviral, and antitumor responses by activating effector immune cells and enhancing antigen presentation. Primarily signals through the JAK-STAT pathway after interaction with its receptor IFNGR1 to affect gene regulation. Upon IFNG binding, IFNGR1 intracellular domain opens out to allow association of downstream signaling components JAK2, JAK1 and STAT1, leading to STAT1 activation, nuclear translocation and transcription of IFNG-regulated genes. Many of the induced genes are transcription factors such as IRF1 that are able to further drive regulation of a next wave of transcription. Plays a role in class I antigen presentation pathway by inducing a replacement of catalytic proteasome subunits with immunoproteasome subunits. In turn, increases the quantity, quality, and repertoire of peptides for class I MHC loading. Increases the efficiency of peptide generation also by inducing the expression of activator PA28 that associates with the proteasome and alters its proteolytic cleavage preference. Up-regulates as well MHC II complexes on the cell surface by promoting expression of several key molecules such as cathepsins B/CTSB, H/CTSH, and L/CTSL. Participates in the regulation of hematopoietic stem cells during development and under homeostatic conditions by affecting their development, quiescence, and differentiation. This Ovis aries (Sheep) protein is Interferon gamma (IFNG).